We begin with the raw amino-acid sequence, 174 residues long: MAPAVMASSATTVAPFQGLKSTAGLPVSRRSRGSLGSVSNGGRIRCMQVWPIEGIKKFETLSYLPPLSTEALSKQVDYLIRSKWVPCLEFSKVGFVFREHNSSPGYYDGRYWTMWKLPMFGCTDATQVLNEVEEVKKEYPDAYVRVIGFDNLRQVQCVSFIAFRPPGCEESGKA.

A chloroplast-targeting transit peptide spans 1–45; sequence MAPAVMASSATTVAPFQGLKSTAGLPVSRRSRGSLGSVSNGGRIR.

It belongs to the RuBisCO small chain family. Heterohexadecamer of 8 large and 8 small subunits.

It localises to the plastid. The protein localises to the chloroplast. In terms of biological role, ruBisCO catalyzes two reactions: the carboxylation of D-ribulose 1,5-bisphosphate, the primary event in carbon dioxide fixation, as well as the oxidative fragmentation of the pentose substrate. Both reactions occur simultaneously and in competition at the same active site. Although the small subunit is not catalytic it is essential for maximal activity. This Triticum aestivum (Wheat) protein is Ribulose bisphosphate carboxylase small subunit, chloroplastic 1.